The chain runs to 236 residues: Large ribosomal subunit protein uL3 (236 aa).

Residues 215-236 (PAPEPAAPVAAAAAGTGEEASA) are disordered. Low complexity predominate over residues 221–236 (APVAAAAAGTGEEASA).

It belongs to the universal ribosomal protein uL3 family. Part of the 50S ribosomal subunit. Forms a cluster with proteins L14 and L19.

Functionally, one of the primary rRNA binding proteins, it binds directly near the 3'-end of the 23S rRNA, where it nucleates assembly of the 50S subunit. This Parafrankia sp. (strain EAN1pec) protein is Large ribosomal subunit protein uL3.